The sequence spans 157 residues: UPF0262 protein amb3341 (157 aa).

It belongs to the UPF0262 family.

This is UPF0262 protein amb3341 from Paramagnetospirillum magneticum (strain ATCC 700264 / AMB-1) (Magnetospirillum magneticum).